We begin with the raw amino-acid sequence, 514 residues long: MYSVLVQETPMALLQLLKEHSSLFAFSLLILLLKFIYKDKSRKRRVKLPPSPPKLPVIGNLHQLGNKPHLSLRCLAEKYGPIIYLQLGEIPTVVVSSARLAKEVLKTHDLALSSRPQIFSAKHLFYNCTDVVFSPYGAYWRHIRKICILELLSAKRVQSFSHVREEEVARLVRRVAEFYPGTTNLTKMLGLYANDVLCRVAFGRGFSEGGDYDRHGFQKMLEEYQELLGGFSIGDFFPSMEFIHSLTGMKSRLQETFRRFDELFDQMVTDHLSPKREKEEHKDLVDVLLDIQKKESTEMPLTMDNVKAIILDMFAAGTDTTFITLDWGMTELLMNRKVLERAQAEVRGVVGERRVVLESDLPQLDYMKAVIKEIFRLHPPAPVLVPRESMEDVTIDGYDILAKTRIFVNAWAIGRDPESWEDPEAFEPERFIGSTIDFKGQDFELIPFGAGRRGCPAVTFGTATIELALAQLLHTFDWELPLDTAAKDLDMTEVFGITMHRIANLIVVARPRFP.

A helical transmembrane segment spans residues 20-37; that stretch reads HSSLFAFSLLILLLKFIY. Residues Asn-127 and Asn-184 are each glycosylated (N-linked (GlcNAc...) asparagine). Cys-455 contributes to the heme binding site.

This sequence belongs to the cytochrome P450 family. It depends on heme as a cofactor. Expressed in fruit kernel, seedlings, leaves and stems.

Its subcellular location is the membrane. In Prunus mume (Japanese apricot), this protein is Cytochrome P450 71AP13.